An 821-amino-acid polypeptide reads, in one-letter code: Integrator complex assembly factor BRAT1 (821 aa).

The segment at 100-200 is required for interaction with NDFIP1; that stretch reads PGLFGEPGPL…WPACAQKIMD (101 aa). HEAT repeat units follow at residues 495–531 and 544–576; these read PQFL…SRHW and SEVP…SSQG. The disordered stretch occupies residues 741 to 767; the sequence is GSPNTASAEATLPRWRAGEQAQPPGDQ. Phosphoserine is present on Ser742. A BRAT1-like motif motif is present at residues 819–821; sequence DCY. Position 820 (Cys820) interacts with Zn(2+).

Belongs to the BRAT1 family. As to quaternary structure, part of the multiprotein complex composed of BRAT1, WDR73, as well as integrator complex subunits INTS9 and INTS11. Interacts with BRCA1 and ATM. Interacts with MTOR and RPTOR. Interacts with NDFIP1. Interacts with SMC1A and PRKDC. In terms of processing, ubiquitinated by NEDD4, NEDD4L and ITCH; mono- and polyubiquitinated forms are detected. Ubiquitously expressed.

It is found in the nucleus. It localises to the cytoplasm. Component of a multiprotein complex required for the assembly of the RNA endonuclease module of the integrator complex. Associates with INTS9 and INTS11 in the cytoplasm and blocks the active site of INTS11 to inhibit the endonuclease activity of INTS11 before formation of the full integrator complex. Following dissociation of WDR73 of the complex, BRAT1 facilitates the nuclear import of the INTS9-INTS11 heterodimer. In the nucleus, INTS4 is integrated to the INTS9-INTS11 heterodimer and BRAT1 is released from the mature RNA endonuclease module by inositol hexakisphosphate (InsP6). BRAT1 is also involved in DNA damage response; activates kinases ATM, SMC1A and PRKDC by modulating their phosphorylation status following ionizing radiation (IR) stress. Plays a role in regulating mitochondrial function and cell proliferation. Required for protein stability of MTOR and MTOR-related proteins, and cell cycle progress by growth factors. The protein is Integrator complex assembly factor BRAT1 of Homo sapiens (Human).